A 129-amino-acid chain; its full sequence is Large ribosomal subunit protein bL21 (129 aa).

The protein belongs to the bacterial ribosomal protein bL21 family. As to quaternary structure, part of the 50S ribosomal subunit. Contacts protein L20.

Its function is as follows. This protein binds to 23S rRNA in the presence of protein L20. In Prochlorococcus marinus (strain MIT 9313), this protein is Large ribosomal subunit protein bL21.